Consider the following 243-residue polypeptide: Adenosylcobinamide-GDP ribazoletransferase (243 aa).

5 consecutive transmembrane segments (helical) span residues 31-48 (LLFYPLVGLLFGVLLWVL), 61-81 (AALLLTAWVLLSGGLHLDGLA), 109-129 (IAVVTLVLVLLLKFTALVALI), 134-154 (GFALLLAPLIGRGALLGLFLC), and 188-208 (LLLGGYSGLWAVLLATVLFFW).

This sequence belongs to the CobS family. Requires Mg(2+) as cofactor.

It is found in the cell inner membrane. It catalyses the reaction alpha-ribazole + adenosylcob(III)inamide-GDP = adenosylcob(III)alamin + GMP + H(+). The enzyme catalyses alpha-ribazole 5'-phosphate + adenosylcob(III)inamide-GDP = adenosylcob(III)alamin 5'-phosphate + GMP + H(+). Its pathway is cofactor biosynthesis; adenosylcobalamin biosynthesis; adenosylcobalamin from cob(II)yrinate a,c-diamide: step 7/7. Joins adenosylcobinamide-GDP and alpha-ribazole to generate adenosylcobalamin (Ado-cobalamin). Also synthesizes adenosylcobalamin 5'-phosphate from adenosylcobinamide-GDP and alpha-ribazole 5'-phosphate. The protein is Adenosylcobinamide-GDP ribazoletransferase of Pseudomonas fluorescens (strain ATCC BAA-477 / NRRL B-23932 / Pf-5).